We begin with the raw amino-acid sequence, 91 residues long: Putative transmembrane protein ORF91a (91 aa).

Helical transmembrane passes span 17–37 (TGISFDSITGAIIAGVVVGLA), 40–60 (AFLGKFPDYVEVLIGVGLLFM), and 69–89 (GIGFVLTADGIYGLIKNYIST).

It is found in the host membrane. The chain is Putative transmembrane protein ORF91a from Acidianus convivator (ABV).